Consider the following 321-residue polypeptide: Epoxyqueuosine reductase (321 aa).

The active-site Proton donor is the Asp137. Positions 179-211 constitute a 4Fe-4S ferredoxin-type domain; the sequence is EPLNADPPARSLCGRCSACIDACPTHAIREPFV. 8 residues coordinate [4Fe-4S] cluster: Cys191, Cys194, Cys197, Cys201, Cys217, Cys245, Cys248, and Cys252.

This sequence belongs to the QueG family. In terms of assembly, monomer. Requires cob(II)alamin as cofactor. The cofactor is [4Fe-4S] cluster.

The protein localises to the cytoplasm. The enzyme catalyses epoxyqueuosine(34) in tRNA + AH2 = queuosine(34) in tRNA + A + H2O. It functions in the pathway tRNA modification; tRNA-queuosine biosynthesis. Catalyzes the conversion of epoxyqueuosine (oQ) to queuosine (Q), which is a hypermodified base found in the wobble positions of tRNA(Asp), tRNA(Asn), tRNA(His) and tRNA(Tyr). This is Epoxyqueuosine reductase from Synechococcus sp. (strain CC9605).